Consider the following 440-residue polypeptide: Chromosomal replication initiator protein DnaA (440 aa).

The domain I, interacts with DnaA modulators stretch occupies residues 1 to 74 (MNPSQILENL…VQSGNKAIIN (74 aa)). Residues 74–99 (NIQAQSAKQSNKSTKIDIAHIKAQST) form a domain II region. Positions 100-316 (ILNPSFTFDS…GIIISLNAYA (217 aa)) are domain III, AAA+ region. The ATP site is built by Gly-146, Gly-148, Lys-149, and Thr-150. Residues 317 to 440 (TILGQEITLE…KNKILVKSQS (124 aa)) are domain IV, binds dsDNA.

Belongs to the DnaA family. In terms of assembly, oligomerizes as a right-handed, spiral filament on DNA at oriC.

It is found in the cytoplasm. Its function is as follows. Plays an essential role in the initiation and regulation of chromosomal replication. ATP-DnaA binds to the origin of replication (oriC) to initiate formation of the DNA replication initiation complex once per cell cycle. Binds the DnaA box (a 9 base pair repeat at the origin) and separates the double-stranded (ds)DNA. Forms a right-handed helical filament on oriC DNA; dsDNA binds to the exterior of the filament while single-stranded (ss)DNA is stabiized in the filament's interior. The ATP-DnaA-oriC complex binds and stabilizes one strand of the AT-rich DNA unwinding element (DUE), permitting loading of DNA polymerase. After initiation quickly degrades to an ADP-DnaA complex that is not apt for DNA replication. Binds acidic phospholipids. The polypeptide is Chromosomal replication initiator protein DnaA (Campylobacter jejuni subsp. jejuni serotype O:23/36 (strain 81-176)).